The chain runs to 586 residues: CTP synthase (586 aa).

The interval Met1 to Leu278 is amidoligase domain. CTP is bound at residue Ser20. A UTP-binding site is contributed by Ser20. Residues Ser21–Leu26 and Asp78 each bind ATP. Asp78 and Glu152 together coordinate Mg(2+). CTP is bound by residues Asp159–Glu161, Lys199–Gln204, and Lys235. UTP-binding positions include Lys199–Gln204 and Lys235. Positions Arg303 to Gly551 constitute a Glutamine amidotransferase type-1 domain. Gly366 serves as a coordination point for L-glutamine. The Nucleophile; for glutamine hydrolysis role is filled by Cys393. L-glutamine is bound by residues Leu394–Gln397, Glu416, and Arg477. Active-site residues include His524 and Glu526. Positions Glu560 to Gly586 are disordered.

It belongs to the CTP synthase family. Homotetramer.

It catalyses the reaction UTP + L-glutamine + ATP + H2O = CTP + L-glutamate + ADP + phosphate + 2 H(+). It carries out the reaction L-glutamine + H2O = L-glutamate + NH4(+). The enzyme catalyses UTP + NH4(+) + ATP = CTP + ADP + phosphate + 2 H(+). It functions in the pathway pyrimidine metabolism; CTP biosynthesis via de novo pathway; CTP from UDP: step 2/2. Allosterically activated by GTP, when glutamine is the substrate; GTP has no effect on the reaction when ammonia is the substrate. The allosteric effector GTP functions by stabilizing the protein conformation that binds the tetrahedral intermediate(s) formed during glutamine hydrolysis. Inhibited by the product CTP, via allosteric rather than competitive inhibition. Catalyzes the ATP-dependent amination of UTP to CTP with either L-glutamine or ammonia as the source of nitrogen. Regulates intracellular CTP levels through interactions with the four ribonucleotide triphosphates. This chain is CTP synthase, found in Mycobacterium tuberculosis (strain ATCC 25177 / H37Ra).